Here is a 295-residue protein sequence, read N- to C-terminus: MADCCVRTCPRPMCIPPSYADLGKAARDIFNKGFGFGLVKLDVKTKSCSGVEFSTSGSSNTDTGKVSGTLETKYKWCEYGLTFTEKWNTDNTLGTEIAIEDQICQGLKLTFDTTFSPNTGKKSGKIKSAYKRECINLGCDVDFDFAGPAIHGSAVFGYEGWLAGYQMTFDSAKSKLTRSNFAVGYRTGDFQLHTNVNNGTEFGGSIYQKVCEDFDTSVNLAWTSGTNCTRFGIAAKYQLDPTASISAKVNNSSLIGVGYTQTLRPGVKLTLSALVDGKSFNAGGHKLGLALELEA.

The ATP site is built by Lys-24 and Lys-32. The residue at position 32 (Lys-32) is an N6-acetyllysine; alternate. The residue at position 32 (Lys-32) is an N6-succinyllysine; alternate. A Glycyl lysine isopeptide (Lys-Gly) (interchain with G-Cter in ubiquitin); alternate cross-link involves residue Lys-32. 2 consecutive transmembrane segments (beta stranded) span residues 38 to 47 (LVKLDVKTKS) and 51 to 59 (VEFSTSGSS). Glycyl lysine isopeptide (Lys-Gly) (interchain with G-Cter in ubiquitin) cross-links involve residues Lys-65 and Lys-73. Beta stranded transmembrane passes span 66–76 (VSGTLETKYKW), 81–88 (LTFTEKWN), 92–101 (TLGTEIAIED), and 107–116 (LKLTFDTTFS). Lys-121 carries the post-translational modification N6-acetyllysine; alternate. Lys-121 participates in a covalent cross-link: Glycyl lysine isopeptide (Lys-Gly) (interchain with G-Cter in ubiquitin); alternate. Glycyl lysine isopeptide (Lys-Gly) (interchain with G-Cter in ubiquitin) cross-links involve residues Lys-122 and Lys-125. A run of 4 beta stranded transmembrane segments spans residues 123–132 (SGKIKSAYKR), 135–142 (INLGCDVD), 149–157 (AIHGSAVFG), and 162–170 (LAGYQMTFD). A Glycyl lysine isopeptide (Lys-Gly) (interchain with G-Cter in ubiquitin) cross-link involves residue Lys-173. 6 beta stranded membrane-spanning segments follow: residues 175–187 (KLTRSNFAVGYRT), 190–197 (FQLHTNVN), 201–210 (EFGGSIYQKV), 214–223 (FDTSVNLAWT), 230–239 (RFGIAAKYQL), and 243–250 (ASISAKVN). Ser-205 is subject to Phosphoserine. The residue at position 252 (Ser-252) is a Phosphoserine. Residues 254 to 256 (LIG) and 272 to 276 (SALVD) each bind NAD(+). 2 beta stranded membrane-spanning segments follow: residues 254–263 (LIGVGYTQTL) and 266–275 (GVKLTLSALV). Position 278 is an N6-acetyllysine; alternate (Lys-278). Residue Lys-278 forms a Glycyl lysine isopeptide (Lys-Gly) (interchain with G-Cter in ubiquitin); alternate linkage. The beta stranded transmembrane segment at 285 to 294 (HKLGLALELE) threads the bilayer. Residue Lys-286 forms a Glycyl lysine isopeptide (Lys-Gly) (interchain with G-Cter in ubiquitin) linkage.

Belongs to the eukaryotic mitochondrial porin family. Monomer, homodimer and higher order oligomers; formation of higher order structures is necessary for scramblase activity. Interacts with ARMC12 in a TBC1D21-dependent manner. Interacts with KLC3. Interacts with SPATA33. Interacts with PPP3CC in a SPATA33-dependent manner. Ubiquitinated by PRKN during mitophagy, leading to its degradation and enhancement of mitophagy. Deubiquitinated by USP30.

Its subcellular location is the mitochondrion outer membrane. It localises to the membrane. It carries out the reaction chloride(in) = chloride(out). The catalysed reaction is K(+)(in) = K(+)(out). It catalyses the reaction a 1,2-diacyl-sn-glycero-3-phospho-L-serine(in) = a 1,2-diacyl-sn-glycero-3-phospho-L-serine(out). The enzyme catalyses a 1,2-diacyl-sn-glycero-3-phosphocholine(in) = a 1,2-diacyl-sn-glycero-3-phosphocholine(out). It carries out the reaction a 1,2-diacyl-sn-glycero-3-phospho-(1D-myo-inositol)(in) = a 1,2-diacyl-sn-glycero-3-phospho-(1D-myo-inositol)(out). Its function is as follows. Non-selective voltage-gated ion channel that mediates the transport of anions and cations through the mitochondrion outer membrane and plasma membrane. The channel adopts an open conformation at zero mV and a closed conformation at both positive and negative potentials. There are two populations of channels; the main that functions in a lower open-state conductance with lower ion selectivity, that switch, in a voltage-dependent manner, from the open to a low-conducting 'closed' state and the other that has a normal ion selectivity in the typical high conductance, 'open' state. Binds various lipids, including the sphingolipid ceramide, the phospholipid phosphatidylcholine, and the sterols cholesterol and oxysterol. Binding of ceramide promotes the mitochondrial outer membrane permeabilization (MOMP) apoptotic pathway. In terms of biological role, catalyzes the scrambling of phospholipids across the outer mitochondrial membrane; the mechanism is unrelated to channel activity and is capable of translocating both anionic and zwitterionic phospholipids. This Mesocricetus auratus (Golden hamster) protein is Non-selective voltage-gated ion channel VDAC2.